The primary structure comprises 261 residues: Receptor expression-enhancing protein 4 (261 aa).

2 consecutive transmembrane segments (helical) span residues 1-21 and 35-55; these read MVSWIISRAVVLVFGLLYPAY and YVRWMMYWIVFALFMTVETFT. Positions 167 to 261 are disordered; the sequence is YTDALYPDEP…KKPAQSEPEN (95 aa). The segment covering 221–230 has biased composition (polar residues); the sequence is KSLQRSQSLR.

Belongs to the DP1 family. As to quaternary structure, interacts with microtubules. In terms of tissue distribution, during gastrulation, expressed on the dorsal side of the embryo and then in the neural plate and neural tube. At tailbud stages, expressed in the somites, neural tube and otic vesicle.

Its subcellular location is the endoplasmic reticulum membrane. In terms of biological role, microtubule-binding protein required to ensure proper cell division and nuclear envelope reassembly by sequestering the endoplasmic reticulum away from chromosomes during mitosis. Probably acts by clearing the endoplasmic reticulum membrane from metaphase chromosomes. May play a role in the maintenance of both the nervous system and the musculature. The chain is Receptor expression-enhancing protein 4 (reep4) from Xenopus laevis (African clawed frog).